Reading from the N-terminus, the 277-residue chain is MKQLYGVIGNPIGHSLSPVMHNDAFEHLNMDAHYHAFLVKEEVLGEAVRGLKALGISGFNVTTPHKVAIMDYLDEIDPLAKQIGAVNTVVHKDGKLIGYNTDGIGFVRALQSISSEPLQEKRILLLGAGGASRAIYFSLADAGVKEIDVANRTVDKAKELIAACTATVHSVALSLEKATKEQGNYDIIIQTTTIGMHPRVEHTPLQISSLKKGTIVSDIIYNPFETKILCEAKEQGAIIQNGIDMFVYQGALAFEMWTGCVPNIERMKQLVIRKLGG.

Shikimate-binding positions include 15-17 (SLS) and Thr62. Lys66 serves as the catalytic Proton acceptor. Residues Asn87 and Asp102 each coordinate shikimate. NADP(+) contacts are provided by residues 127-131 (GAGGA), 151-156 (NRTVDK), and Ile219. Tyr221 is a shikimate binding site. Position 242 (Gly242) interacts with NADP(+).

Belongs to the shikimate dehydrogenase family. In terms of assembly, homodimer.

It catalyses the reaction shikimate + NADP(+) = 3-dehydroshikimate + NADPH + H(+). The protein operates within metabolic intermediate biosynthesis; chorismate biosynthesis; chorismate from D-erythrose 4-phosphate and phosphoenolpyruvate: step 4/7. Its function is as follows. Involved in the biosynthesis of the chorismate, which leads to the biosynthesis of aromatic amino acids. Catalyzes the reversible NADPH linked reduction of 3-dehydroshikimate (DHSA) to yield shikimate (SA). This Bacillus cereus (strain AH820) protein is Shikimate dehydrogenase (NADP(+)).